The sequence spans 674 residues: MASKLTTTSQHILENLGGPDNITSMTHCATRLRFQVKDQSIVDQQEIDSDPSVLGVVPQGSTGMQVVMGGSVANYYQEILKLDGMKHFADGEATESSSKKEYGGVRGKYSGIDYAFEFLSDTFRPILWALLGASLIITLLVLADTFGLQDFRAPMDEQPDTYVFLHSMWRSVFYFLPIMVGATAARKLGANEWIGAAIPAALLTPEFLALGSAGDTVTVFGLPMVLNDYSGQVFPPLIAAIGLYWVEKALKKIIPEAVQMVFVPFFSLLIMIPATAFLLGPFGIGVGNGISSLLEAVNNFSPFILSIVIPLLYPFLVPLGLHWPLNAIMIQNLNTLGYDFIQGPMGAWNFACFGLVTGVFLIALKEKNRAMRQVSLGGMLAGLLGGISEPSLYGVLLRFKKTYFRLLPGCLVGGIVMGIFDIKAYAFVFTSLLTIPAMDPWLGYTVGIAAAFFTSMLLVLFFDYRSDAERDEAKAQMAAAEQTNNTPAAPAAPVAPAAGAAAAGGAAGATAVATKPRLAAGQLVEITSPLEGHAVPLSEVPDPIFAAGKLGPGIAIEPTGNTVVAPADATVILVQKSGHAVALRLESGVELLIHIGLDTVQLGGEGFKVHVERKQQVKAGDPLITFDPEFIRSKNLPLITPVVVSNANKFGEIVGIEAAQADATTTVIKVNGAE.

Residues 1-89 (MASKLTTTSQ…LKLDGMKHFA (89 aa)) form the PTS EIIB type-1 domain. Cys28 functions as the Phosphocysteine intermediate; for EIIB activity in the catalytic mechanism. One can recognise a PTS EIIC type-1 domain in the interval 117-476 (EFLSDTFRPI…DAERDEAKAQ (360 aa)). The next 10 membrane-spanning stretches (helical) occupy residues 126–146 (ILWA…ADTF), 162–182 (YVFL…MVGA), 193–213 (WIGA…LGSA), 225–245 (VLND…GLYW), 260–280 (MVFV…FLLG), 303–323 (FILS…GLHW), 344–364 (PMGA…LIAL), 376–396 (LGGM…YGVL), 409–429 (GCLV…AFVF), and 442–462 (LGYT…VLFF). Residues 542–646 (DPIFAAGKLG…PLITPVVVSN (105 aa)) enclose the PTS EIIA type-1 domain. The Tele-phosphohistidine intermediate; for EIIA activity role is filled by His594.

The protein resides in the cell membrane. The enzyme catalyses N(pros)-phospho-L-histidyl-[protein] + D-glucose(out) = D-glucose 6-phosphate(in) + L-histidyl-[protein]. Functionally, the phosphoenolpyruvate-dependent sugar phosphotransferase system (sugar PTS), a major carbohydrate active transport system, catalyzes the phosphorylation of incoming sugar substrates concomitantly with their translocation across the cell membrane. This system is involved in glucose transport. The sequence is that of PTS system glucose-specific EIIBCA component (ptsG) from Corynebacterium glutamicum (Brevibacterium saccharolyticum).